We begin with the raw amino-acid sequence, 319 residues long: MATH domain and coiled-coil domain-containing protein At3g58200 (319 aa).

The MATH domain occupies 6–132; that stretch reads DNKFRWVIKN…NEEVKIVVEV (127 aa). The stretch at 255–302 forms a coiled coil; the sequence is FKVDWLEKKLEEVKEKKKEEQIGETRMQEMKVFKQKCSDIEALMEREK.

This Arabidopsis thaliana (Mouse-ear cress) protein is MATH domain and coiled-coil domain-containing protein At3g58200.